Reading from the N-terminus, the 35-residue chain is Mu-thomitoxin-Hme1c (35 aa).

Disulfide bonds link C2/C18, C9/C23, and C17/C34.

It belongs to the neurotoxin 07 (Beta/delta-agtx) family. Expressed by the venom gland.

The protein localises to the secreted. Its function is as follows. Gating-modifier toxin that inhibits mammalian and insect voltage-gated sodium channels. It shifts the voltage dependence of channel activation to more positive voltages. It shows potent activity on Nav1.4/SCN4A (IC(50)=103 nM), Nav1.5/SCN5A (IC(50)=268 nM) and Para/DmNav1 (IC(50)=555 nM) and lower activities on Nav1.2/SCN2A (IC(50)=1447 nM) and Nav1.6/SCN8A (IC(50)=3504 nM). In addition, at a concentration of 1 uM, the toxin inhibits 90-100% of sodium current through Nav1.2/SCN2A, Nav1.4/SCN4A, Nav1.5/SCN5A, Nav1.6/SCN8A and Para/DmNav1 channels, when the voltage of maximal activation of the channel in control conditions is applied. It binds to the S3-S4 helix-loop-helix motif in the voltage-sensing domain of repeat 1 (shown on hNav1.4/SCN4A). The toxin is amphiphilic and binds to both neutral and negatively charged lipid vesicles with high affinity. The hydrophobic face lies on the opposite side to the hydrophobic faces of classical gating modifiers. The polypeptide is Mu-thomitoxin-Hme1c (Heriaeus mellotteei (Crab spider)).